The primary structure comprises 95 residues: Aspartyl/glutamyl-tRNA(Asn/Gln) amidotransferase subunit C (95 aa).

Belongs to the GatC family. Heterotrimer of A, B and C subunits.

It carries out the reaction L-glutamyl-tRNA(Gln) + L-glutamine + ATP + H2O = L-glutaminyl-tRNA(Gln) + L-glutamate + ADP + phosphate + H(+). It catalyses the reaction L-aspartyl-tRNA(Asn) + L-glutamine + ATP + H2O = L-asparaginyl-tRNA(Asn) + L-glutamate + ADP + phosphate + 2 H(+). Its function is as follows. Allows the formation of correctly charged Asn-tRNA(Asn) or Gln-tRNA(Gln) through the transamidation of misacylated Asp-tRNA(Asn) or Glu-tRNA(Gln) in organisms which lack either or both of asparaginyl-tRNA or glutaminyl-tRNA synthetases. The reaction takes place in the presence of glutamine and ATP through an activated phospho-Asp-tRNA(Asn) or phospho-Glu-tRNA(Gln). The protein is Aspartyl/glutamyl-tRNA(Asn/Gln) amidotransferase subunit C of Hyphomonas neptunium (strain ATCC 15444).